The following is a 324-amino-acid chain: Fructose-1,6-bisphosphatase class 1 (324 aa).

Mg(2+)-binding residues include Glu88, Asp107, Leu109, and Asp110. Residues 110–113 (DGSS), Asn199, and Lys265 contribute to the substrate site. Position 271 (Glu271) interacts with Mg(2+).

Belongs to the FBPase class 1 family. As to quaternary structure, homotetramer. It depends on Mg(2+) as a cofactor.

It is found in the cytoplasm. It catalyses the reaction beta-D-fructose 1,6-bisphosphate + H2O = beta-D-fructose 6-phosphate + phosphate. The protein operates within carbohydrate biosynthesis; gluconeogenesis. This chain is Fructose-1,6-bisphosphatase class 1, found in Neisseria meningitidis serogroup A / serotype 4A (strain DSM 15465 / Z2491).